We begin with the raw amino-acid sequence, 239 residues long: tRNA (guanine-N(1)-)-methyltransferase (239 aa).

S-adenosyl-L-methionine contacts are provided by residues Gly113 and 137 to 142 (LGDYVL).

Belongs to the RNA methyltransferase TrmD family. As to quaternary structure, homodimer.

The protein resides in the cytoplasm. The enzyme catalyses guanosine(37) in tRNA + S-adenosyl-L-methionine = N(1)-methylguanosine(37) in tRNA + S-adenosyl-L-homocysteine + H(+). Specifically methylates guanosine-37 in various tRNAs. This Cutibacterium acnes (strain DSM 16379 / KPA171202) (Propionibacterium acnes) protein is tRNA (guanine-N(1)-)-methyltransferase.